Consider the following 382-residue polypeptide: Alkanesulfonate monooxygenase (382 aa).

The protein belongs to the SsuD family.

The catalysed reaction is an alkanesulfonate + FMNH2 + O2 = an aldehyde + FMN + sulfite + H2O + 2 H(+). Catalyzes the desulfonation of aliphatic sulfonates. The protein is Alkanesulfonate monooxygenase of Pseudomonas sp.